Consider the following 481-residue polypeptide: UDP-glycosyltransferase 85A2 (481 aa).

Residues serine 303, 360–362 (CPQ), 377–385 (HCGWNSTLE), and 399–402 (FAEQ) contribute to the UDP-alpha-D-glucose site.

It belongs to the UDP-glycosyltransferase family. In terms of tissue distribution, expressed in roots, shoots, leaves and flowers.

The sequence is that of UDP-glycosyltransferase 85A2 (UGT85A2) from Arabidopsis thaliana (Mouse-ear cress).